The primary structure comprises 29 residues: Glucagon (29 aa).

At S2 the chain carries Phosphoserine.

This sequence belongs to the glucagon family.

Its subcellular location is the secreted. Glucagon plays a key role in glucose metabolism and homeostasis. Regulates blood glucose by increasing gluconeogenesis and decreasing glycolysis. This is Glucagon (GCG) from Oryctolagus cuniculus (Rabbit).